The primary structure comprises 213 residues: Proteasome subunit beta (213 aa).

The propeptide at 1 to 11 (MPEQYQESMTG) is removed in mature form; by autocatalysis. Residue Thr-12 is the Nucleophile of the active site.

It belongs to the peptidase T1B family. As to quaternary structure, the 20S proteasome core is composed of 14 alpha and 14 beta subunits that assemble into four stacked heptameric rings, resulting in a barrel-shaped structure. The two inner rings, each composed of seven catalytic beta subunits, are sandwiched by two outer rings, each composed of seven alpha subunits. The catalytic chamber with the active sites is on the inside of the barrel. Has a gated structure, the ends of the cylinder being occluded by the N-termini of the alpha-subunits. Is capped at one or both ends by the proteasome regulatory ATPase, PAN.

It localises to the cytoplasm. It carries out the reaction Cleavage of peptide bonds with very broad specificity.. Its activity is regulated as follows. The formation of the proteasomal ATPase PAN-20S proteasome complex, via the docking of the C-termini of PAN into the intersubunit pockets in the alpha-rings, triggers opening of the gate for substrate entry. Interconversion between the open-gate and close-gate conformations leads to a dynamic regulation of the 20S proteasome proteolysis activity. Its function is as follows. Component of the proteasome core, a large protease complex with broad specificity involved in protein degradation. This is Proteasome subunit beta from Methanoregula boonei (strain DSM 21154 / JCM 14090 / 6A8).